Here is a 643-residue protein sequence, read N- to C-terminus: Hypoxia up-regulated protein 1 (643 aa).

An N-terminal signal peptide occupies residues 1–22 (MRPLVCVFTMFLLALLSSNTES). The tract at residues 565-643 (LGNTISSLFG…EEEKSEPQEE (79 aa)) is disordered. Residues 590–610 (VQEEDEVPTEPTKEEEQESAD) show a composition bias toward acidic residues. Basic and acidic residues-rich tracts occupy residues 611-621 (AADKQKDKEKG) and 630-643 (EGKK…PQEE).

Belongs to the heat shock protein 70 family.

The protein localises to the endoplasmic reticulum lumen. In terms of biological role, has a pivotal role in cytoprotective cellular mechanisms triggered by oxygen deprivation. May play a role as a molecular chaperone and participate in protein folding. The protein is Hypoxia up-regulated protein 1 (hyou1) of Xenopus tropicalis (Western clawed frog).